The chain runs to 267 residues: 3-methyl-2-oxobutanoate hydroxymethyltransferase (267 aa).

Mg(2+) is bound by residues Asp41 and Asp80. 3-methyl-2-oxobutanoate is bound by residues 41–42 (DS), Asp80, and Lys109. Glu111 is a Mg(2+) binding site. The active-site Proton acceptor is Glu178.

Belongs to the PanB family. Homodecamer; pentamer of dimers. The cofactor is Mg(2+).

The protein resides in the cytoplasm. The enzyme catalyses 3-methyl-2-oxobutanoate + (6R)-5,10-methylene-5,6,7,8-tetrahydrofolate + H2O = 2-dehydropantoate + (6S)-5,6,7,8-tetrahydrofolate. It functions in the pathway cofactor biosynthesis; (R)-pantothenate biosynthesis; (R)-pantoate from 3-methyl-2-oxobutanoate: step 1/2. Catalyzes the reversible reaction in which hydroxymethyl group from 5,10-methylenetetrahydrofolate is transferred onto alpha-ketoisovalerate to form ketopantoate. The polypeptide is 3-methyl-2-oxobutanoate hydroxymethyltransferase (Kosmotoga olearia (strain ATCC BAA-1733 / DSM 21960 / TBF 19.5.1)).